The following is a 504-amino-acid chain: 2,3-bisphosphoglycerate-independent phosphoglycerate mutase (504 aa).

The Mn(2+) site is built by D11 and S61. The Phosphoserine intermediate role is filled by S61. Residues H122, R152–D153, R183, R189, R255–R258, and K329 each bind substrate. Residues D396, H400, D437, H438, and H455 each coordinate Mn(2+).

The protein belongs to the BPG-independent phosphoglycerate mutase family. Monomer. Requires Mn(2+) as cofactor.

It carries out the reaction (2R)-2-phosphoglycerate = (2R)-3-phosphoglycerate. It functions in the pathway carbohydrate degradation; glycolysis; pyruvate from D-glyceraldehyde 3-phosphate: step 3/5. Functionally, catalyzes the interconversion of 2-phosphoglycerate and 3-phosphoglycerate. The polypeptide is 2,3-bisphosphoglycerate-independent phosphoglycerate mutase (Bacteroides thetaiotaomicron (strain ATCC 29148 / DSM 2079 / JCM 5827 / CCUG 10774 / NCTC 10582 / VPI-5482 / E50)).